The chain runs to 108 residues: uncharacterized protein (108 aa).

This is an uncharacterized protein from Treponema pallidum (strain Nichols).